The chain runs to 145 residues: D-aminoacyl-tRNA deacylase (145 aa).

The short motif at 137 to 138 is the Gly-cisPro motif, important for rejection of L-amino acids element; the sequence is GP.

The protein belongs to the DTD family. Homodimer.

The protein resides in the cytoplasm. It carries out the reaction glycyl-tRNA(Ala) + H2O = tRNA(Ala) + glycine + H(+). It catalyses the reaction a D-aminoacyl-tRNA + H2O = a tRNA + a D-alpha-amino acid + H(+). In terms of biological role, an aminoacyl-tRNA editing enzyme that deacylates mischarged D-aminoacyl-tRNAs. Also deacylates mischarged glycyl-tRNA(Ala), protecting cells against glycine mischarging by AlaRS. Acts via tRNA-based rather than protein-based catalysis; rejects L-amino acids rather than detecting D-amino acids in the active site. By recycling D-aminoacyl-tRNA to D-amino acids and free tRNA molecules, this enzyme counteracts the toxicity associated with the formation of D-aminoacyl-tRNA entities in vivo and helps enforce protein L-homochirality. The polypeptide is D-aminoacyl-tRNA deacylase (Shewanella amazonensis (strain ATCC BAA-1098 / SB2B)).